Reading from the N-terminus, the 623-residue chain is Cilia- and flagella-associated protein 52 (623 aa).

11 WD repeats span residues 65-109 (GHGN…LMAR), 112-153 (LHKG…AICG), 159-198 (LNVGNATTVIFSKCRDEMFVTAGNGTIRVWELDLPNRKIW), 291-330 (QLQGGITSITLRGEGHQFFVGTEESHIYRVNFTNFKETLI), 333-372 (CHFESVEDIVFPFGTAELFATCAKKDIRVWHTLTNRELLR), 375-414 (VPNMTCHGIDFMRDGKSIISAWDDGRIRAFAPETGRLMYV), 418-457 (AHRIGVTAIATTSDCKRVISGGGEGEVRVWHIGHQTQKLE), 462-501 (EHKSSVSCIRVKKSNEECVTASTDGTCIIWDLVRLRRNQM), 503-544 (LANT…RELD), 546-585 (SLSGAVNGMDITVEGVHFVTGGNDHLVKVWDYNEGEVTHV), and 588-623 (GHSGNITRIRISPGNQYIVSVSADGAILRWKYPFPS).

This sequence belongs to the CFAP52 family. As to quaternary structure, microtubule inner protein component of sperm flagellar doublet microtubules. Interacts with BRCA2. Interacts with the CCT chaperonin complex. Interacts with HSP70. Interacts with AK8. Interacts with CFAP45. Interacts with DNAI1. Interacts with IQDC. Expressed in trachea multiciliated cells.

It localises to the cytoplasm. The protein resides in the cytoskeleton. It is found in the cilium axoneme. The protein localises to the flagellum axoneme. Its function is as follows. Microtubule inner protein (MIP) part of the dynein-decorated doublet microtubules (DMTs) in cilia axoneme. Important for proper ciliary and flagellar beating. May act in cooperation with CFAP45 and axonemal dynein subunit DNAH11. May play a role in cell growth and/or survival. The sequence is that of Cilia- and flagella-associated protein 52 (CFAP52) from Bos taurus (Bovine).